Consider the following 875-residue polypeptide: Receptor-like protein 33 (875 aa).

An N-terminal signal peptide occupies residues 1–23; it reads MSLIPITFYFLFLFFSNFRGVFA. The Extracellular portion of the chain corresponds to 24–822; that stretch reads VPNIHLCHFE…GESETLESEQ (799 aa). N-linked (GlcNAc...) asparagine glycans are attached at residues asparagine 65, asparagine 103, asparagine 133, asparagine 146, and asparagine 181. LRR repeat units follow at residues 110–133, 134–157, 159–182, 183–205, 206–230, 231–254, 256–278, 280–302, 303–327, and 329–351; these read FHFL…SIGN, LSHL…SLGN, FHLT…LGNL, SYLT…SFGS, LNQL…VINL, TKLS…ITSL, ILES…LFTI, SITL…NISS, PSNL…ISRL, and NLRT…IFSH. N-linked (GlcNAc...) asparagine glycosylation is found at asparagine 229 and asparagine 250. Asparagine 299 is a glycosylation site (N-linked (GlcNAc...) asparagine). The stretch at 352-377 is one LRR 11; degenerate repeat; that stretch reads LKLLGNLYLSHSNTTTTIDLNAVLSC. Residues asparagine 364, asparagine 395, and asparagine 411 are each glycosylated (N-linked (GlcNAc...) asparagine). LRR repeat units lie at residues 378–401, 404–427, 428–451, 455–477, 479–502, 503–528, 530–549, 550–573, 575–596, 597–619, 620–643, 686–710, 711–734, 735–758, and 760–783; these read FKML…SVSD, LGLI…LRTQ, RQMR…LLLQ, MHIS…TVVP, PSMK…ICSL, RSLI…KFKS, LSDL…KTII, KSLR…LIHF, TLEV…WLSS, LKKL…KTRF, PKLR…CFVE, LKIY…IGLL, KELH…MGNL, RELE…LGNL, and YLAY…QFRT. N-linked (GlcNAc...) asparagine glycosylation is found at asparagine 490 and asparagine 514. Asparagine 587 is a glycosylation site (N-linked (GlcNAc...) asparagine). An N-linked (GlcNAc...) asparagine glycan is attached at asparagine 633. Residues asparagine 717, asparagine 757, and asparagine 765 are each glycosylated (N-linked (GlcNAc...) asparagine). Residues 823–843 traverse the membrane as a helical segment; it reads VLSWIAAAIGFTPGIVLGLTI. The Cytoplasmic segment spans residues 844–875; sequence GHIVLSSKPRWFFKVLYINNSRRRRRTRSEKS.

The protein belongs to the RLP family.

It is found in the cell membrane. The chain is Receptor-like protein 33 from Arabidopsis thaliana (Mouse-ear cress).